A 224-amino-acid chain; its full sequence is UPF0173 metal-dependent hydrolase TTHA1283 (224 aa).

This sequence belongs to the UPF0173 family.

The protein is UPF0173 metal-dependent hydrolase TTHA1283 of Thermus thermophilus (strain ATCC 27634 / DSM 579 / HB8).